The sequence spans 457 residues: Multidrug resistance protein MdtK (457 aa).

12 helical membrane-spanning segments follow: residues 11-31, 53-73, 93-113, 127-147, 160-180, 189-209, 243-263, 276-296, 314-334, 357-377, 387-407, and 418-438; these read LLAL…MGFV, IWLP…PVIA, WLAG…GYII, AVGY…FQVA, GMVM…IFIY, GGVG…FSMI, LPIA…ALLV, IALN…AAVT, AART…LFTV, LMLL…GSGI, IFFI…YILA, and PAGF…LMML.

This sequence belongs to the multi antimicrobial extrusion (MATE) (TC 2.A.66.1) family. MdtK subfamily.

The protein resides in the cell inner membrane. In terms of biological role, multidrug efflux pump that functions probably as a Na(+)/drug antiporter. The protein is Multidrug resistance protein MdtK of Enterobacter sp. (strain 638).